The sequence spans 186 residues: Tumor necrosis factor alpha-induced protein 8-like protein 1 (186 aa).

It belongs to the TNFAIP8 family. In terms of assembly, interacts with FBXW5; TNFAIP8L1 competes with TSC2 to bind FBXW5 increasing TSC2 stability by preventing its ubiquitination. Detected in wide variety tissues, such as neurons in brain, hepatocytes, germ cells of female and male reproductive organs, muscular tissues and variety types of cells of the epithelial origin (at protein level).

The protein localises to the cytoplasm. Functionally, acts as a negative regulator of mTOR activity. The protein is Tumor necrosis factor alpha-induced protein 8-like protein 1 (Tnfaip8l1) of Mus musculus (Mouse).